The following is a 492-amino-acid chain: Ketol-acid reductoisomerase (NADP(+)) (492 aa).

The region spanning 14–208 (LDQLGKCRFM…GGHRAGVLQS (195 aa)) is the KARI N-terminal Rossmann domain. NADP(+) is bound by residues 45 to 48 (CGAQ), Arg68, Arg76, Ser78, and 108 to 110 (DKQ). The active site involves His132. Gly158 lines the NADP(+) pocket. KARI C-terminal knotted domains lie at 209–344 (SFVA…NAPQ) and 345–485 (FDGK…MKDM). Residues Asp217, Glu221, Glu389, and Glu393 each contribute to the Mg(2+) site. Substrate is bound at residue Ser414.

The protein belongs to the ketol-acid reductoisomerase family. Mg(2+) is required as a cofactor.

The catalysed reaction is (2R)-2,3-dihydroxy-3-methylbutanoate + NADP(+) = (2S)-2-acetolactate + NADPH + H(+). It carries out the reaction (2R,3R)-2,3-dihydroxy-3-methylpentanoate + NADP(+) = (S)-2-ethyl-2-hydroxy-3-oxobutanoate + NADPH + H(+). The protein operates within amino-acid biosynthesis; L-isoleucine biosynthesis; L-isoleucine from 2-oxobutanoate: step 2/4. Its pathway is amino-acid biosynthesis; L-valine biosynthesis; L-valine from pyruvate: step 2/4. Its function is as follows. Involved in the biosynthesis of branched-chain amino acids (BCAA). Catalyzes an alkyl-migration followed by a ketol-acid reduction of (S)-2-acetolactate (S2AL) to yield (R)-2,3-dihydroxy-isovalerate. In the isomerase reaction, S2AL is rearranged via a Mg-dependent methyl migration to produce 3-hydroxy-3-methyl-2-ketobutyrate (HMKB). In the reductase reaction, this 2-ketoacid undergoes a metal-dependent reduction by NADPH to yield (R)-2,3-dihydroxy-isovalerate. The protein is Ketol-acid reductoisomerase (NADP(+)) of Pectobacterium atrosepticum (strain SCRI 1043 / ATCC BAA-672) (Erwinia carotovora subsp. atroseptica).